Here is a 106-residue protein sequence, read N- to C-terminus: UPF0145 protein Tpet_0165 (106 aa).

This sequence belongs to the UPF0145 family.

In Thermotoga petrophila (strain ATCC BAA-488 / DSM 13995 / JCM 10881 / RKU-1), this protein is UPF0145 protein Tpet_0165.